We begin with the raw amino-acid sequence, 78 residues long: Small ribosomal subunit protein bS18 (78 aa).

Belongs to the bacterial ribosomal protein bS18 family. Part of the 30S ribosomal subunit. Forms a tight heterodimer with protein bS6.

Its function is as follows. Binds as a heterodimer with protein bS6 to the central domain of the 16S rRNA, where it helps stabilize the platform of the 30S subunit. The polypeptide is Small ribosomal subunit protein bS18 (Pediococcus pentosaceus (strain ATCC 25745 / CCUG 21536 / LMG 10740 / 183-1w)).